A 416-amino-acid chain; its full sequence is Cyclin-dependent kinase 8 (416 aa).

An interaction with CCNC region spans residues 1–15; sequence MDYDFKVKLTGERER. In terms of domain architecture, Protein kinase spans 21–287; that stretch reads EYEGCKVGRG…SEQAMQDPYF (267 aa). Residues 27–35 and K52 each bind ATP; that span reads VGRGTYGHV. Catalysis depends on D151, which acts as the Proton acceptor. The disordered stretch occupies residues 313–416; the sequence is EEEPDDKGDK…PQYSHQTHRY (104 aa). Low complexity predominate over residues 325 to 343; that stretch reads QQQQQGNNHTNGTGHPGNQ. 2 stretches are compositionally biased toward polar residues: residues 361 to 378 and 386 to 416; these read PTTT…QRSN and PGPS…THRY.

Belongs to the protein kinase superfamily. CMGC Ser/Thr protein kinase family. CDC2/CDKX subfamily. As to quaternary structure, component of the Mediator complex. Interacts with ccnc. Requires Mg(2+) as cofactor.

The protein localises to the nucleus. The enzyme catalyses L-seryl-[protein] + ATP = O-phospho-L-seryl-[protein] + ADP + H(+). The catalysed reaction is L-threonyl-[protein] + ATP = O-phospho-L-threonyl-[protein] + ADP + H(+). It catalyses the reaction [DNA-directed RNA polymerase] + ATP = phospho-[DNA-directed RNA polymerase] + ADP + H(+). In terms of biological role, component of the Mediator complex, a coactivator involved in regulated gene transcription of nearly all RNA polymerase II-dependent genes. Mediator functions as a bridge to convey information from gene-specific regulatory proteins to the basal RNA polymerase II transcription machinery. Mediator is recruited to promoters by direct interactions with regulatory proteins and serves as a scaffold for the assembly of a functional pre-initiation complex with RNA polymerase II and the general transcription factors. Phosphorylates the CTD (C-terminal domain) of the large subunit of RNA polymerase II (RNAp II), which may inhibit the formation of a transcription initiation complex. This is Cyclin-dependent kinase 8 (cdk8) from Xenopus laevis (African clawed frog).